The following is a 432-amino-acid chain: Trigger factor (432 aa).

Residues G161–P246 enclose the PPIase FKBP-type domain.

This sequence belongs to the FKBP-type PPIase family. Tig subfamily.

Its subcellular location is the cytoplasm. The enzyme catalyses [protein]-peptidylproline (omega=180) = [protein]-peptidylproline (omega=0). In terms of biological role, involved in protein export. Acts as a chaperone by maintaining the newly synthesized protein in an open conformation. Functions as a peptidyl-prolyl cis-trans isomerase. The sequence is that of Trigger factor from Vibrio vulnificus (strain CMCP6).